Consider the following 950-residue polypeptide: MADLSLLQEDLQEDADGFGVDDYSSESDVIIIPSALDFVSQDEMLTPLGRLDKYAASENIFNRQMVARSLLDTLREVCDDERDCIAVLERISRLADDSEPTVRAELMEQVPHIALFCQENRPSIPYAFSKFLLPIVVRYLADQNNQVRKTSQAALLALLEQELIERFDVETKVCPVLIELTAPDSNDDVKTEAVAIMCKMAPMVGKDITERLILPRFCEMCCDCRMFHVRKVCAANFGDICSVVGQQATEEMLLPRFFQLCSDNVWGVRKACAECFMAVSCATCQEIRRTKLSALFINLISDPSRWVRQAAFQSLGPFISTFANPSSSGQYFKEESKSSEEMSVENKNRTRDQEAPEDVQVRPEDTPSDLSVSNSSVILENTMEDHAAEASGKPLGEISVPLDSSLLCTLSSESHQEAASNENDKKPGNYKSMLRPEVGTTSQDSALLDQELYNSFHFWRTPLPEIDLDIELEQNSGGKPSPEGPEEESEGPVPSSPNITMATRKELEEMIENLEPHIDDPDVKAQVEVLSAALRASSLDAHEETISIEKRSDLQDELDINELPNCKINQEDSVPLISDAVENMDSTLHYIHSDSDLSNNSSFSPDEERRTKVQDVVPQALLDQYLSMTDPSRAQTVDTEIAKHCAYSLPGVALTLGRQNWHCLRETYETLASDMQWKVRRTLAFSIHELAVILGDQLTAADLVPIFNGFLKDLDEVRIGVLKHLHDFLKLLHIDKRREYLYQLQEFLVTDNSRNWRFRAELAEQLILLLELYSPRDVYDYLRPIALNLCADKVSSVRWISYKLVSEMVKKLHAATPPTFGVDLINELVENFGRCPKWSGRQAFVFVCQTVIEDDCLPMDQFAVHLMPHLLTLANDRVPNVRVLLAKTLRQTLLEKDYFLASASCHQEAVEQTIMALQMDRDSDVKYFASIHPASTKISEDAMSTASSTY.

HEAT repeat units follow at residues 1 to 25, 26 to 63, 65 to 81, 82 to 119, 127 to 164, 168 to 206, 208 to 246, 248 to 285, and 287 to 324; these read MADL…DYSS, ESDV…IFNR, MVAR…CDDE, RDCI…FCQE, AFSK…QELI, DVET…MVGK, ITER…VVGQ, ATEE…ATCQ, and IRRT…TFAN. Disordered regions lie at residues 326 to 374, 413 to 438, and 473 to 499; these read SSSG…SVSN, ESHQ…RPEV, and EQNS…SPNI. Residues 332–365 show a composition bias toward basic and acidic residues; sequence FKEESKSSEEMSVENKNRTRDQEAPEDVQVRPED. HEAT repeat units follow at residues 505-542, 568-606, 698-734, 799-837, and 861-898; these read KELE…LDAH, INQE…FSPD, LTAA…LLHI, WISY…RCPK, and QFAV…EKDY. S935 carries the post-translational modification Phosphoserine.

Serine/threonine-protein phosphatase 4 (PP4) occurs in different assemblies of the catalytic and one or more regulatory subunits. Component of the PP4 complex PPP4C-PPP4R1. Interacts with HDAC3. In terms of assembly, (Microbial infection) Interacts with merkel polyomavirus small tumor antigen; this interaction bridges small tumor antigen with NEMO to inhibit NF-kappa-B. Widely expressed with high expression in cultured mesangial cells. Isoform 1 and isoform 2 are expressed in renal tissues.

In terms of biological role, regulatory subunit of serine/threonine-protein phosphatase 4. May play a role in regulation of cell division in renal glomeruli. The PPP4C-PPP4R1 PP4 complex may play a role in dephosphorylation and regulation of HDAC3. Plays a role in the inhibition of TNF-induced NF-kappa-B activation by regulating the dephosphorylation of TRAF2. Functionally, (Microbial infection) Participates in merkel polyomavirus-mediated inhibition of NF-kappa-B by bridging viral small tumor antigen with NEMO. The sequence is that of Serine/threonine-protein phosphatase 4 regulatory subunit 1 (PPP4R1) from Homo sapiens (Human).